Reading from the N-terminus, the 351-residue chain is Modulator of apoptosis 1 (351 aa).

An LIR motif is present at residues 49–52; sequence YRLL. The interval 120–127 is BH3-like; it reads LSRALGHE. The tract at residues 202–205 is RASSF1-binding; it reads KRRR.

Belongs to the PNMA family. Homodimer. Under normal circumstances, held in an inactive conformation by an intramolecular interaction. Interacts with BAX. Binding to RASSF1 isoform A (RASSF1A) relieves this inhibitory interaction and allows further binding to BAX. Also binds to BCL2 and BCLX. Recruited to the TNFRSF1A and TNFRSF10A complexes in response to their respective cognate ligand, after internalization. Interacts with TRIM39. Interacts with RASSF6. Interacts with ATG8 proteins MAP1LC3A, MAP1LC3B and MAP1LC3C. Does not interact with ATG8 proteins GABARAPL1, GABARAPL2 and GABARAP. Interacts with SQSTM1; promoting dissociation of SQSTM1 inclusion bodies that sequester KEAP1. Ubiquitinated and degraded during mitotic exit by APC/C-Cdh1, this modification is inhibited by TRIM39. As to expression, widely expressed, with high levels in heart and brain.

The protein localises to the cytoplasm. Its subcellular location is the cytosol. It is found in the mitochondrion outer membrane. It localises to the extracellular vesicle membrane. Its function is as follows. Retrotransposon-derived protein that forms virion-like capsids. Acts as an effector of BAX during apoptosis: enriched at outer mitochondria membrane and associates with BAX upon induction of apoptosis, facilitating BAX-dependent mitochondrial outer membrane permeabilization and apoptosis. Required for death receptor-dependent apoptosis. When associated with RASSF1, promotes BAX conformational change and translocation to mitochondrial membranes in response to TNF and TNFSF10 stimulation. Also promotes autophagy: promotes phagophore closure via association with ATG8 proteins. Acts as an inhibitor of the NFE2L2/NRF2 pathway via interaction with SQSTM1: interaction promotes dissociation of SQSTM1 inclusion bodies that sequester KEAP1, relieving inactivation of the BCR(KEAP1) complex. The sequence is that of Modulator of apoptosis 1 from Homo sapiens (Human).